Here is a 178-residue protein sequence, read N- to C-terminus: Ribosome maturation factor RimM (178 aa).

A PRC barrel domain is found at Q99 to F178.

The protein belongs to the RimM family. Binds ribosomal protein uS19.

The protein resides in the cytoplasm. In terms of biological role, an accessory protein needed during the final step in the assembly of 30S ribosomal subunit, possibly for assembly of the head region. Essential for efficient processing of 16S rRNA. May be needed both before and after RbfA during the maturation of 16S rRNA. It has affinity for free ribosomal 30S subunits but not for 70S ribosomes. This chain is Ribosome maturation factor RimM, found in Pseudoalteromonas translucida (strain TAC 125).